The primary structure comprises 437 residues: F-box/FBD/LRR-repeat protein At5g22700 (437 aa).

Residues 5 to 51 (GDRISSLPDELLCQILSNLPTKNAVTTSILSTRWRSIWLSTPVLDID) form the F-box domain. LRR repeat units lie at residues 86 to 113 (RDDVDMCTIMPWIQDAVNRRIQHLEVDC), 134 to 160 (SLRLHFVTLHRYEFVSLPNLKVMHLEE), 161 to 186 (NIYYCLETLENFISSCPVLEDLTVVR), 187 to 210 (IVDIITEKILRVRSRSLNSLKLVL), 215 to 240 (GWFIDDIDEWKVIIDAPRLAYLSLKD), 272 to 297 (PVTFERSNVGKLLTGLSSIRDLTISG), and 322 to 350 (NARFYDCDLEMLPCVLESCPNLKSLVLGL). Positions 361 to 406 (RVSSVPPCFLSSLEFVEIRSRLCRKRYVMKVARYFAKNSVMLKKFV) constitute an FBD domain.

In Arabidopsis thaliana (Mouse-ear cress), this protein is F-box/FBD/LRR-repeat protein At5g22700.